A 195-amino-acid chain; its full sequence is tRNA (pseudouridine(54)-N(1))-methyltransferase (195 aa).

Leucine 129 serves as a coordination point for S-adenosyl-L-methionine.

It belongs to the methyltransferase superfamily. TrmY family. Homodimer.

The protein localises to the cytoplasm. The enzyme catalyses pseudouridine(54) in tRNA + S-adenosyl-L-methionine = N(1)-methylpseudouridine(54) in tRNA + S-adenosyl-L-homocysteine + H(+). In terms of biological role, specifically catalyzes the N1-methylation of pseudouridine at position 54 (Psi54) in tRNAs. The sequence is that of tRNA (pseudouridine(54)-N(1))-methyltransferase from Methanocorpusculum labreanum (strain ATCC 43576 / DSM 4855 / Z).